A 473-amino-acid polypeptide reads, in one-letter code: Cardiolipin synthase C (473 aa).

2 PLD phosphodiesterase domains span residues 125 to 152 (LNRRMHNKSFTVDGVVTLVGGRNIGDAY) and 364 to 391 (SGASLHAKTFSIDGKTVFIGSFNFDPRS). Active-site residues include histidine 130, lysine 132, aspartate 137, histidine 369, lysine 371, and aspartate 376.

Belongs to the phospholipase D family. Cardiolipin synthase subfamily. ClsC sub-subfamily.

It carries out the reaction a 1,2-diacyl-sn-glycero-3-phospho-(1'-sn-glycerol) + a 1,2-diacyl-sn-glycero-3-phosphoethanolamine = a cardiolipin + ethanolamine. Full activity requires coexpression with the neighboring gene ymdB. Its function is as follows. Catalyzes the synthesis of cardiolipin (CL) (diphosphatidylglycerol) from phosphatidylglycerol (PG) and phosphatidylethanolamine (PE). This is Cardiolipin synthase C from Escherichia coli (strain K12).